We begin with the raw amino-acid sequence, 342 residues long: DNA repair protein RAD51 homolog 1 (342 aa).

Residues 1 to 24 (MTTMEQRRNQNAVQQQDDEETQHG) form a disordered region. The 30-residue stretch at 51–80 (TVEGVAYTPRKDLLQIKGISDAKVDKIVEA) folds into the HhH domain. Residues 100–314 (QEIIQITSGS…LRKGRAEERI (215 aa)) form the FtsK domain. Residue 130-137 (GEFRSGKT) coordinates ATP.

The protein belongs to the RecA family. RAD51 subfamily. In terms of assembly, self-associates and interacts with XRCC3. Binds to RAD54/CHR25. Interacts with BRCA2A and BRCA2B. Can form a tripartite complex with both BRCA2B and DSS1(I). Detected in various tissues. Higher expression in reproductive tissues than in vegetative tissues, with the highest expression level in young flower buds. At cellular level, is expressed at low levels in flower primordia, then at higher levels in young anthers and at highest levels in both females and males meiocytes. Not detected in gametophytes.

It is found in the nucleus. Binds to single and double-stranded DNA and exhibits DNA-dependent ATPase activity. Unwinds duplex DNA. Component of the meiotic recombination pathway. Seems to play a role in mediating chromosome homology search, chromosome pairing and synapsis at early stages and probably chromosome crossing-over at later stages in meiosis. Probably is involved in the repair of meiotic double strand breaks (DBSs) generated by AtSPO11-1 and in homologous recombination. Its function is dispensable for vegetative growth and root mitosis. The polypeptide is DNA repair protein RAD51 homolog 1 (Arabidopsis thaliana (Mouse-ear cress)).